The chain runs to 254 residues: Membrane protein US20 (254 aa).

7 helical membrane-spanning segments follow: residues 31 to 51, 62 to 82, 89 to 109, 114 to 134, 143 to 163, 178 to 198, and 208 to 228; these read AIFI…WLGF, YSFF…YTLG, ATVL…FQMC, VLVG…GLAF, WKCI…LALL, AFSI…VIFF, and AVCL…MLSG.

The protein resides in the host membrane. The protein is Membrane protein US20 (US20) of Homo sapiens (Human).